The sequence spans 214 residues: MSTKLQDHFDKITKILSGFGVEGCISYGEITFSIRDQRDIHLILKKLKKEYLFEQLTDVTAVDYLTYGQSDWQVGKVVSQTGFSRGRQQDFKTAAVDNRFEIIYQLLSMANNVRIRVKCKLKDAQIILVDSVSDLWPSANWTEREVYDMFGIYFNNHPDLRRVLTDYGFVGHPLRKDFPQTGYVEMRYDENLGRVVYEPVEIDDRVNTPRVIRN.

This sequence belongs to the complex I 30 kDa subunit family. NDH-1 is composed of 14 different subunits. Subunits NuoB, C, D, E, F, and G constitute the peripheral sector of the complex.

The protein resides in the cell inner membrane. The catalysed reaction is a quinone + NADH + 5 H(+)(in) = a quinol + NAD(+) + 4 H(+)(out). Functionally, NDH-1 shuttles electrons from NADH, via FMN and iron-sulfur (Fe-S) centers, to quinones in the respiratory chain. The immediate electron acceptor for the enzyme in this species is believed to be ubiquinone. Couples the redox reaction to proton translocation (for every two electrons transferred, four hydrogen ions are translocated across the cytoplasmic membrane), and thus conserves the redox energy in a proton gradient. In Francisella tularensis subsp. tularensis (strain WY96-3418), this protein is NADH-quinone oxidoreductase subunit C.